The following is a 98-amino-acid chain: Large ribosomal subunit protein uL23 (98 aa).

It belongs to the universal ribosomal protein uL23 family. As to quaternary structure, part of the 50S ribosomal subunit. Contacts protein L29, and trigger factor when it is bound to the ribosome.

Functionally, one of the early assembly proteins it binds 23S rRNA. One of the proteins that surrounds the polypeptide exit tunnel on the outside of the ribosome. Forms the main docking site for trigger factor binding to the ribosome. The chain is Large ribosomal subunit protein uL23 from Sorangium cellulosum (strain So ce56) (Polyangium cellulosum (strain So ce56)).